The chain runs to 186 residues: MFDIGFSELILLMVLGLVVLGPKRLPIAIRTVMDWVKTIRGLAANVQNELKQELKLQELQDSIKKAESLNLQALSPELSKTVEELKAQADKMKAELEDKAAQAGTTVEDQIKEIKSAAENAEKSQNAISVEEAAETLSEAERTPTDLTALETHEKVELNTHLSSYYPPDDIEIAPASKSQSSKTKS.

A helical transmembrane segment spans residues 1-21 (MFDIGFSELILLMVLGLVVLG). Residues 120–186 (NAEKSQNAIS…SKSQSSKTKS (67 aa)) are disordered. Positions 177-186 (SKSQSSKTKS) are enriched in polar residues.

The protein belongs to the TatB family. The Tat system comprises two distinct complexes: a TatABC complex, containing multiple copies of TatA, TatB and TatC subunits, and a separate TatA complex, containing only TatA subunits. Substrates initially bind to the TatABC complex, which probably triggers association of the separate TatA complex to form the active translocon.

The protein localises to the cell inner membrane. Its function is as follows. Part of the twin-arginine translocation (Tat) system that transports large folded proteins containing a characteristic twin-arginine motif in their signal peptide across membranes. Together with TatC, TatB is part of a receptor directly interacting with Tat signal peptides. TatB may form an oligomeric binding site that transiently accommodates folded Tat precursor proteins before their translocation. This is Sec-independent protein translocase protein TatB from Haemophilus influenzae (strain ATCC 51907 / DSM 11121 / KW20 / Rd).